The following is a 214-amino-acid chain: dITP/XTP pyrophosphatase (214 aa).

13-18 serves as a coordination point for substrate; sequence SHNAGK. Residues aspartate 45 and aspartate 74 each contribute to the Mg(2+) site. Aspartate 74 functions as the Proton acceptor in the catalytic mechanism. Residues serine 75, 163–166, lysine 186, and 199–200 contribute to the substrate site; these read FGYD and HR.

This sequence belongs to the HAM1 NTPase family. Homodimer. The cofactor is Mg(2+).

The catalysed reaction is XTP + H2O = XMP + diphosphate + H(+). It carries out the reaction dITP + H2O = dIMP + diphosphate + H(+). The enzyme catalyses ITP + H2O = IMP + diphosphate + H(+). Pyrophosphatase that catalyzes the hydrolysis of nucleoside triphosphates to their monophosphate derivatives, with a high preference for the non-canonical purine nucleotides XTP (xanthosine triphosphate), dITP (deoxyinosine triphosphate) and ITP. Seems to function as a house-cleaning enzyme that removes non-canonical purine nucleotides from the nucleotide pool, thus preventing their incorporation into DNA/RNA and avoiding chromosomal lesions. The chain is dITP/XTP pyrophosphatase from Rhizobium meliloti (strain 1021) (Ensifer meliloti).